The chain runs to 707 residues: Choline transporter-like protein 4 (707 aa).

Over M1 to D27 the chain is Cytoplasmic. A helical transmembrane segment spans residues I28 to A48. Residues W49–W225 are Extracellular-facing. N-linked (GlcNAc...) asparagine glycans are attached at residues N62, N140, N176, N191, and N196. A helical transmembrane segment spans residues P226–L246. Residues R247–T249 lie on the Cytoplasmic side of the membrane. The chain crosses the membrane as a helical span at residues A250 to Y270. The Extracellular portion of the chain corresponds to H271 to W305. Residues L306–L326 traverse the membrane as a helical segment. The Cytoplasmic segment spans residues R327–P354. The chain crosses the membrane as a helical span at residues L355–L375. At A376–N442 the chain is on the extracellular side. 3 N-linked (GlcNAc...) asparagine glycosylation sites follow: N389, N397, and N401. Residues V443–G463 form a helical membrane-spanning segment. Topologically, residues A464–H494 are cytoplasmic. A helical membrane pass occupies residues T495–L515. Residues E516 to Y556 lie on the Extracellular side of the membrane. The chain crosses the membrane as a helical span at residues I557–L577. At M578–L593 the chain is on the cytoplasmic side. A helical membrane pass occupies residues L594–F614. At S615 to Y633 the chain is on the extracellular side. N622 is a glycosylation site (N-linked (GlcNAc...) asparagine). The chain crosses the membrane as a helical span at residues W634–V654. Over Y655–K707 the chain is Cytoplasmic.

It belongs to the CTL (choline transporter-like) family.

The protein resides in the membrane. The protein localises to the apical cell membrane. It catalyses the reaction choline(out) + n H(+)(in) = choline(in) + n H(+)(out). The catalysed reaction is thiamine diphosphate(out) = thiamine diphosphate(in). Its function is as follows. Choline transporter that seems to play a role in the choline-acetylcholine system and is required to the efferent innervation of hair cells in the olivocochlear bundle for the maintenance of physiological function of outer hair cells and the protection of hair cells from acoustic injury. Also described as a thiamine pyrophosphate transporter. Also described as a thiamine pyrophosphate transporter. The chain is Choline transporter-like protein 4 (slc44a4) from Xenopus laevis (African clawed frog).